Here is a 463-residue protein sequence, read N- to C-terminus: Argininosuccinate lyase (463 aa).

It belongs to the lyase 1 family. Argininosuccinate lyase subfamily.

The protein resides in the cytoplasm. The enzyme catalyses 2-(N(omega)-L-arginino)succinate = fumarate + L-arginine. It participates in amino-acid biosynthesis; L-arginine biosynthesis; L-arginine from L-ornithine and carbamoyl phosphate: step 3/3. This chain is Argininosuccinate lyase, found in Dinoroseobacter shibae (strain DSM 16493 / NCIMB 14021 / DFL 12).